Reading from the N-terminus, the 412-residue chain is Multidrug resistance protein MdtA (412 aa).

The signal sequence occupies residues 1–21 (MKGSNIRRWGAALAVVIIAGA). 2 disordered regions span residues 33–53 (GSGA…RHGR) and 389–412 (VVTA…GARS).

This sequence belongs to the membrane fusion protein (MFP) (TC 8.A.1) family. Part of a tripartite efflux system composed of MdtA, MdtB and MdtC.

The protein localises to the cell inner membrane. The polypeptide is Multidrug resistance protein MdtA (Klebsiella pneumoniae subsp. pneumoniae (strain ATCC 700721 / MGH 78578)).